We begin with the raw amino-acid sequence, 311 residues long: LOB domain-containing protein 10 (311 aa).

The region spanning Thr-4–Leu-105 is the LOB domain. Low complexity predominate over residues Leu-264–Leu-277. Residues Leu-264–Phe-311 form a disordered region. Over residues His-287–Glu-296 the composition is skewed to acidic residues. Residues Pro-297–Phe-311 show a composition bias toward basic and acidic residues.

It belongs to the LOB domain-containing protein family.

This is LOB domain-containing protein 10 (LBD10) from Arabidopsis thaliana (Mouse-ear cress).